The primary structure comprises 75 residues: uncharacterized protein (75 aa).

The region spanning T3–E45 is the SpoVT-AbrB domain.

Belongs to the VapB family.

This is an uncharacterized protein from Escherichia coli (strain K12).